We begin with the raw amino-acid sequence, 120 residues long: Protein EPIDERMAL PATTERNING FACTOR 2 (120 aa).

An N-terminal signal peptide occupies residues 1–25 (MTKFVRKYMFCLVLVFAACSLVVNS). Cystine bridges form between cysteine 76–cysteine 107, cysteine 80–cysteine 86, cysteine 83–cysteine 109, and cysteine 95–cysteine 101.

It belongs to the plant cysteine rich small secretory peptide family. Epidermal patterning factor subfamily. In terms of assembly, interacts with ERECTA, ERL1 and TMM. In terms of tissue distribution, expressed in leaves, especially by the MMCs and their early descendants cells (stomatal lineage cells) including guard mother cells (GMCs).

The protein localises to the secreted. Controls stomatal patterning. Regulates the number of cells that enter, and remain in, the stomatal lineage by inhibiting protodermal cells from adopting the meristemoid mother cell (MMC) fate in a non-cell-autonomous manner. Mediates stomatal development inhibition. MEPF2: mobile signal controlling stomatal development in a non-cell-autonomous manner. Uses ERECTA as major receptor. Inactivated by cleavage by CRSP (AC Q9LNU1). May act by competing with somatogen (AC Q9SV72) for the same receptor, TMM (AC Q9SSD1). In Arabidopsis thaliana (Mouse-ear cress), this protein is Protein EPIDERMAL PATTERNING FACTOR 2.